Consider the following 173-residue polypeptide: Large ribosomal subunit protein bL9 (173 aa).

The tract at residues 151–173 (YDDTPDRTETEESTKELQEEHAE) is disordered.

This sequence belongs to the bacterial ribosomal protein bL9 family.

Functionally, binds to the 23S rRNA. This chain is Large ribosomal subunit protein bL9, found in Lawsonia intracellularis (strain PHE/MN1-00).